A 172-amino-acid polypeptide reads, in one-letter code: Regulator of hemoglobinization and erythroid cell expansion protein (172 aa).

A helical membrane pass occupies residues 9-29 (WHGLVIAVVSLFLQACFLTAI). Residues 52-106 (VPRPSPGHHHPPAVKEMKETQTERDIPMSDSLYRHDSDTPSDSLDSSCSSPPACQ) are disordered. Basic and acidic residues predominate over residues 64 to 89 (AVKEMKETQTERDIPMSDSLYRHDSD). Residues 91–103 (PSDSLDSSCSSPP) show a composition bias toward low complexity. 2 positions are modified to phosphotyrosine: tyrosine 132 and tyrosine 141.

In terms of assembly, interacts with EPOR; this interaction occurs in a erythropoietin (EPO)-dependent manner. Interacts with JAK2; this interaction occurs in a erythropoietin (EPO)-dependent manner. Interacts (via tyrosine-phosphorylated form) with GRB2. Post-translationally, phosphorylated. Phosphorylation on Tyr-132 and Tyr-141 occurs in a erythropoietin (EPO)-dependent manner. As to expression, expressed in the proerythroblasts (at protein level). Expressed strongly in the kidney. Expressed weakly in the pancreas, liver and lung. Expressed strongly in erythroid progenitor cells (EPCs). Expressed weakly in T-cells and neutrophils.

Its subcellular location is the cell membrane. Functionally, acts as a signaling transduction factor of the EPO-EPOR signaling pathway promoting erythroid cell differentiation. The polypeptide is Regulator of hemoglobinization and erythroid cell expansion protein (Homo sapiens (Human)).